Reading from the N-terminus, the 517-residue chain is Crotonobetaine/carnitine--CoA ligase (517 aa).

Belongs to the ATP-dependent AMP-binding enzyme family.

It carries out the reaction 4-(trimethylamino)butanoate + ATP + CoA = 4-(trimethylamino)butanoyl-CoA + AMP + diphosphate. The catalysed reaction is crotonobetaine + ATP + CoA = crotonobetainyl-CoA + AMP + diphosphate. It catalyses the reaction (R)-carnitine + ATP + CoA = (R)-carnitinyl-CoA + AMP + diphosphate. It participates in amine and polyamine metabolism; carnitine metabolism. Its function is as follows. Catalyzes the transfer of CoA to carnitine, generating the initial carnitinyl-CoA needed for the CaiB reaction cycle. Also has activity toward crotonobetaine and gamma-butyrobetaine. This Escherichia coli O9:H4 (strain HS) protein is Crotonobetaine/carnitine--CoA ligase.